The primary structure comprises 67 residues: Small integral membrane protein 20 (67 aa).

Over 1–6 (MSRNLR) the chain is Mitochondrial matrix. Residues 7–27 (TALIFGGFISLIGAAFYPIYF) traverse the membrane as a helical segment. Residues 28-67 (RPLMRLEEYKKEQAINRAGIVQEDVQPPGLKVWSDPFGRK) are Mitochondrial intermembrane-facing. At phenylalanine 64 the chain carries Phenylalanine amide.

In terms of assembly, component of the MITRAC (mitochondrial translation regulation assembly intermediate of cytochrome c oxidase complex) complex, the core components of this complex being COA3/MITRAC12 and COX14. Interacts with COA3/MITRAC12 and COX4I1. Directly interacts with newly synthesized MT-CO1/COX1. In terms of tissue distribution, expressed in the ovary, specifically in granulosa cells of follicles that have passed the primary stage and in oocytes (at protein level).

Its subcellular location is the mitochondrion inner membrane. The protein resides in the secreted. Its function is as follows. Component of the MITRAC (mitochondrial translation regulation assembly intermediate of cytochrome c oxidase complex) complex, that regulates cytochrome c oxidase assembly. Promotes the progression of complex assembly after the association of MT-CO1/COX1 with COX4I1 and COX6C. Chaperone-like assembly factor required to stabilize newly synthesized MT-CO1/COX1 and to prevent its premature turnover. In terms of biological role, peptide involved in a broad spectrum of regulatory functions. Is a ligand for GPR173. As part of the reproductive cycle, it regulates gonadotropin-releasing hormone (GnRH) signaling in the hypothalamus and pituitary gland which augments the release of luteinizing hormone. Plays a protective role in memory retention through activation of GNRHR. Regulates the secretion of AVP by hypothalamic neurons. Plays a role in the transduction of the itch sensation. Induces anxiolytic effects, reducing behavior associated with anxiety. Regulates food intake as well as satiation and satiety. In the ovary, it regulates follicular growth by stimulating granulosa cell proliferation by increasing the expression of GPR173, CREB1, CYP19A1, KITLG, FSHR, and LHCGR. It also increases the production of estradiol (E2). In the heart, it regulates contractility and relaxation. It also plays a cardioprotective role during ischemia, where it activates the SAFE and RISK pathways. Stimulates the proliferation and differentiation of preadipocytes. In pancreatic islet cells, it induces proliferation of islet cells as well as the production of INS. The protein is Small integral membrane protein 20 (SMIM20) of Homo sapiens (Human).